The primary structure comprises 142 residues: Ribosome-binding factor A (142 aa).

The disordered stretch occupies residues 119–142 (EAKQKQHGVETDAEQGDTKEEGDK).

This sequence belongs to the RbfA family. In terms of assembly, monomer. Binds 30S ribosomal subunits, but not 50S ribosomal subunits or 70S ribosomes.

It localises to the cytoplasm. Its function is as follows. One of several proteins that assist in the late maturation steps of the functional core of the 30S ribosomal subunit. Associates with free 30S ribosomal subunits (but not with 30S subunits that are part of 70S ribosomes or polysomes). Required for efficient processing of 16S rRNA. May interact with the 5'-terminal helix region of 16S rRNA. This chain is Ribosome-binding factor A, found in Shewanella pealeana (strain ATCC 700345 / ANG-SQ1).